Consider the following 714-residue polypeptide: Probable serine/threonine-protein kinase At1g09600 (714 aa).

Positions 1–64 are disordered; the sequence is MGCNCTKGTR…NVGFEERSND (64 aa). The N-myristoyl glycine moiety is linked to residue Gly-2. Residues 16 to 27 show a composition bias toward low complexity; it reads VDNSNSIVSNVN. A compositionally biased stretch (basic residues) spans 31–46; the sequence is RRSKPKKTPKKKKKSK. The Protein kinase domain occupies 163–447; sequence FEKLEKIGQG…TASALESEFF (285 aa). ATP is bound by residues 169-177 and Lys-192; that span reads IGQGTYSSV. The active-site Proton acceptor is the Asp-287. Positions 471–498 are enriched in basic and acidic residues; that stretch reads KAQEEEAKRKKDTSSKQNDSKQVSRESK. Disordered stretches follow at residues 471-579 and 693-714; these read KAQE…RKEL and VDKKTNRGDNRQTQAFLAANGR. Polar residues-rich tracts occupy residues 506-528 and 556-573; these read NAESLTSIQKRQGQHNQVSNSDK and GVSSVNRNGENVMMGSSR.

This sequence belongs to the protein kinase superfamily. Ser/Thr protein kinase family.

This Arabidopsis thaliana (Mouse-ear cress) protein is Probable serine/threonine-protein kinase At1g09600.